The following is a 614-amino-acid chain: Type VII secretion system protein EssD (614 aa).

The segment at 417-445 (QNHVTHGPKDSMVRSEGKHSISSHEMNSS) is disordered. A compositionally biased stretch (basic and acidic residues) spans 423 to 435 (GPKDSMVRSEGKH).

The protein belongs to the EssD family. Interacts (via C-terminal) with EssG; this interaction blocks EssD activity. Interacts with EssE.

It is found in the secreted. The protein localises to the cell membrane. Component of the type VII secretion system (Ess). Plays a role in Ess secretion during infection. Required for the efficient secretion of EsxA. Required for abscess formation and staphylococcal persistence in host tissues. Possesses a toxic DNase activity that is modulated by EsaG by forming a nuclease toxin-antitoxin pair. This nuclease toxin targets competitor bacteria. The chain is Type VII secretion system protein EssD from Staphylococcus aureus (strain USA300).